Consider the following 54-residue polypeptide: UPF0391 membrane protein pRL90066 (54 aa).

The next 2 helical transmembrane spans lie at 5-25 (ALVF…GIAG) and 28-48 (ASIA…SLVM).

Belongs to the UPF0391 family.

The protein resides in the cell membrane. In Rhizobium johnstonii (strain DSM 114642 / LMG 32736 / 3841) (Rhizobium leguminosarum bv. viciae), this protein is UPF0391 membrane protein pRL90066.